We begin with the raw amino-acid sequence, 560 residues long: Membrane protein insertase YidC (560 aa).

6 consecutive transmembrane segments (helical) span residues 5–25, 334–354, 357–377, 431–451, 476–496, and 522–542; these read IINLVAAIILSLSIIFGWQYF, AIDFGWFYIITKPVFYAMNFF, YVGNFGVSILIVTVIIKLLMF, LPILVQIPVFFSIYKVLYVTI, LFGLLPFSPPSFLMIGAWPIL, and FMPLIFLFMFSSFPVGLLIYW.

The protein belongs to the OXA1/ALB3/YidC family. Type 1 subfamily. Interacts with the Sec translocase complex via SecD. Specifically interacts with transmembrane segments of nascent integral membrane proteins during membrane integration.

Its subcellular location is the cell inner membrane. Its function is as follows. Required for the insertion and/or proper folding and/or complex formation of integral membrane proteins into the membrane. Involved in integration of membrane proteins that insert both dependently and independently of the Sec translocase complex, as well as at least some lipoproteins. Aids folding of multispanning membrane proteins. This Rickettsia massiliae (strain Mtu5) protein is Membrane protein insertase YidC.